The following is a 330-amino-acid chain: Aspartate--ammonia ligase (330 aa).

Belongs to the class-II aminoacyl-tRNA synthetase family. AsnA subfamily.

It localises to the cytoplasm. The catalysed reaction is L-aspartate + NH4(+) + ATP = L-asparagine + AMP + diphosphate + H(+). It functions in the pathway amino-acid biosynthesis; L-asparagine biosynthesis; L-asparagine from L-aspartate (ammonia route): step 1/1. The protein is Aspartate--ammonia ligase of Streptococcus uberis (strain ATCC BAA-854 / 0140J).